We begin with the raw amino-acid sequence, 74 residues long: MKPEIHPKYTKVTVNCANCGTSFETRSTRNNIKVDICSSCHPFYTGKQVLVDTAGRVERFKKRFAKAAPKAAAN.

The protein belongs to the bacterial ribosomal protein bL31 family. Type A subfamily. As to quaternary structure, part of the 50S ribosomal subunit.

In terms of biological role, binds the 23S rRNA. In Chlorobaculum parvum (strain DSM 263 / NCIMB 8327) (Chlorobium vibrioforme subsp. thiosulfatophilum), this protein is Large ribosomal subunit protein bL31.